Reading from the N-terminus, the 179-residue chain is MSRLQDFYKSKVAPDLQAKFGYKSTMEVPRITKVTLNMGVSEAVADKKVIEHAVSDLTKIAGQKPVVTKTRKAIAGFKIRENYPIGCMVTLRGQRMYEFLDRLVAVALPRVRDFRGISGRAFDGRGNYNIGVKEQIIFPEIEYDKIDALRGLNISITTTAKTDDEAKALLTAFSFPFRN.

Belongs to the universal ribosomal protein uL5 family. As to quaternary structure, part of the 50S ribosomal subunit; part of the 5S rRNA/L5/L18/L25 subcomplex. Contacts the 5S rRNA and the P site tRNA. Forms a bridge to the 30S subunit in the 70S ribosome.

Functionally, this is one of the proteins that bind and probably mediate the attachment of the 5S RNA into the large ribosomal subunit, where it forms part of the central protuberance. In the 70S ribosome it contacts protein S13 of the 30S subunit (bridge B1b), connecting the 2 subunits; this bridge is implicated in subunit movement. Contacts the P site tRNA; the 5S rRNA and some of its associated proteins might help stabilize positioning of ribosome-bound tRNAs. This Bordetella petrii (strain ATCC BAA-461 / DSM 12804 / CCUG 43448) protein is Large ribosomal subunit protein uL5.